The sequence spans 432 residues: 23S rRNA (uracil(1939)-C(5))-methyltransferase RlmD (432 aa).

The region spanning 1-54 is the TRAM domain; it reads MNPVVDILSLDHEGHGVARLDGKVTFVDGALAGERAEIAIFRKHAKYNSANAVA. Residues Cys67, Cys73, Cys76, and Cys155 each contribute to the [4Fe-4S] cluster site. S-adenosyl-L-methionine-binding residues include Gln264, Phe293, Asn298, Glu314, Asn341, and Asp362. The Nucleophile role is filled by Cys389.

Belongs to the class I-like SAM-binding methyltransferase superfamily. RNA M5U methyltransferase family. RlmD subfamily.

It catalyses the reaction uridine(1939) in 23S rRNA + S-adenosyl-L-methionine = 5-methyluridine(1939) in 23S rRNA + S-adenosyl-L-homocysteine + H(+). Catalyzes the formation of 5-methyl-uridine at position 1939 (m5U1939) in 23S rRNA. This Thiobacillus denitrificans (strain ATCC 25259 / T1) protein is 23S rRNA (uracil(1939)-C(5))-methyltransferase RlmD.